Here is a 184-residue protein sequence, read N- to C-terminus: Cytochrome c homolog (184 aa).

Topologically, residues 1–10 (MDSFELNKIL) are cytoplasmic. A helical; Signal-anchor transmembrane segment spans residues 11 to 31 (GAVLGTCLILLVTSFTANALF). At 32–184 (SPKMPEKPGF…HPKPLPTASK (153 aa)) the chain is on the periplasmic side. The heme c site is built by cysteine 84, cysteine 87, histidine 88, and methionine 151.

Belongs to the cytochrome c family. In terms of processing, binds 1 heme c group covalently per subunit.

The protein resides in the cell membrane. May be involved in electron transfer from bc1 complex to aa3. The sequence is that of Cytochrome c homolog (cycM) from Bradyrhizobium diazoefficiens (strain JCM 10833 / BCRC 13528 / IAM 13628 / NBRC 14792 / USDA 110).